Reading from the N-terminus, the 175-residue chain is Large ribosomal subunit protein uL10 (175 aa).

The protein belongs to the universal ribosomal protein uL10 family. In terms of assembly, part of the ribosomal stalk of the 50S ribosomal subunit. The N-terminus interacts with L11 and the large rRNA to form the base of the stalk. The C-terminus forms an elongated spine to which L12 dimers bind in a sequential fashion forming a multimeric L10(L12)X complex.

In terms of biological role, forms part of the ribosomal stalk, playing a central role in the interaction of the ribosome with GTP-bound translation factors. The chain is Large ribosomal subunit protein uL10 from Mycobacterium sp. (strain JLS).